Reading from the N-terminus, the 124-residue chain is Small ribosomal subunit protein uS12 (124 aa).

3-methylthioaspartic acid is present on Asp89.

It belongs to the universal ribosomal protein uS12 family. Part of the 30S ribosomal subunit. Contacts proteins S8 and S17. May interact with IF1 in the 30S initiation complex.

In terms of biological role, with S4 and S5 plays an important role in translational accuracy. Its function is as follows. Interacts with and stabilizes bases of the 16S rRNA that are involved in tRNA selection in the A site and with the mRNA backbone. Located at the interface of the 30S and 50S subunits, it traverses the body of the 30S subunit contacting proteins on the other side and probably holding the rRNA structure together. The combined cluster of proteins S8, S12 and S17 appears to hold together the shoulder and platform of the 30S subunit. This chain is Small ribosomal subunit protein uS12, found in Buchnera aphidicola subsp. Cinara cedri (strain Cc).